Reading from the N-terminus, the 360-residue chain is GTPase Obg (360 aa).

The 156-residue stretch at 1-156 (MFVDSVEIII…KCVRLELKLI (156 aa)) folds into the Obg domain. In terms of domain architecture, OBG-type G spans 157–360 (ADIGLVGFPN…LKFVLLEALP (204 aa)). Residues 163–170 (GFPNAGKS), 188–192 (FTTLV), 210–213 (DIPG), 279–282 (NKCD), and 341–343 (SAL) each bind GTP. Positions 170 and 190 each coordinate Mg(2+).

This sequence belongs to the TRAFAC class OBG-HflX-like GTPase superfamily. OBG GTPase family. In terms of assembly, monomer. Requires Mg(2+) as cofactor.

The protein localises to the cytoplasm. Functionally, an essential GTPase which binds GTP, GDP and possibly (p)ppGpp with moderate affinity, with high nucleotide exchange rates and a fairly low GTP hydrolysis rate. Plays a role in control of the cell cycle, stress response, ribosome biogenesis and in those bacteria that undergo differentiation, in morphogenesis control. This Helicobacter pylori (strain Shi470) protein is GTPase Obg.